We begin with the raw amino-acid sequence, 131 residues long: RutC family protein YjgH (131 aa).

Belongs to the RutC family.

This is RutC family protein YjgH (yjgH) from Escherichia coli (strain K12).